Consider the following 126-residue polypeptide: Large ribosomal subunit protein bL17c (126 aa).

Residues 1–10 (MIDNGGRFFA) constitute a chloroplast transit peptide.

As to quaternary structure, component of the chloroplast large ribosomal subunit (LSU). Mature 70S chloroplast ribosomes of higher plants consist of a small (30S) and a large (50S) subunit. The 30S small subunit contains 1 molecule of ribosomal RNA (16S rRNA) and 24 different proteins. The 50S large subunit contains 3 rRNA molecules (23S, 5S and 4.5S rRNA) and 33 different proteins.

The protein localises to the plastid. It is found in the chloroplast. In terms of biological role, component of the chloroplast ribosome (chloro-ribosome), a dedicated translation machinery responsible for the synthesis of chloroplast genome-encoded proteins, including proteins of the transcription and translation machinery and components of the photosynthetic apparatus. The polypeptide is Large ribosomal subunit protein bL17c (RPL17) (Spinacia oleracea (Spinach)).